We begin with the raw amino-acid sequence, 657 residues long: Methionine--tRNA ligase (657 aa).

Residues Tyr-13–His-23 carry the 'HIGH' region motif. The 'KMSKS' region motif lies at Lys-308 to Ser-312. Residue Lys-311 coordinates ATP. The tRNA-binding domain maps to Asp-557 to Lys-657.

The protein belongs to the class-I aminoacyl-tRNA synthetase family. MetG type 2B subfamily. Homodimer.

The protein localises to the cytoplasm. It carries out the reaction tRNA(Met) + L-methionine + ATP = L-methionyl-tRNA(Met) + AMP + diphosphate. Is required not only for elongation of protein synthesis but also for the initiation of all mRNA translation through initiator tRNA(fMet) aminoacylation. This chain is Methionine--tRNA ligase, found in Staphylococcus aureus (strain Mu50 / ATCC 700699).